Reading from the N-terminus, the 382-residue chain is tRNA (guanine(37)-N(1))-methyltransferase (382 aa).

Residues His205, 243-244, 269-270, and Asn291 contribute to the S-adenosyl-L-methionine site; these read DL and DA.

Belongs to the class I-like SAM-binding methyltransferase superfamily. TRM5/TYW2 family. In terms of assembly, monomer.

The protein resides in the mitochondrion matrix. The protein localises to the nucleus. It is found in the cytoplasm. It catalyses the reaction guanosine(37) in tRNA + S-adenosyl-L-methionine = N(1)-methylguanosine(37) in tRNA + S-adenosyl-L-homocysteine + H(+). Its function is as follows. Specifically methylates the N1 position of guanosine-37 in various cytoplasmic and mitochondrial tRNAs. Methylation is not dependent on the nature of the nucleoside 5' of the target nucleoside. This is the first step in the biosynthesis of wybutosine (yW), a modified base adjacent to the anticodon of tRNAs and required for accurate decoding. This Entamoeba histolytica (strain ATCC 30459 / HM-1:IMSS / ABRM) protein is tRNA (guanine(37)-N(1))-methyltransferase.